The chain runs to 151 residues: Ribosome maturation factor RimP (151 aa).

Belongs to the RimP family.

It is found in the cytoplasm. Its function is as follows. Required for maturation of 30S ribosomal subunits. The protein is Ribosome maturation factor RimP of Shewanella sediminis (strain HAW-EB3).